The sequence spans 155 residues: Immunoglobulin domain-containing protein oig-4 (155 aa).

An N-terminal signal peptide occupies residues 1 to 22 (MSFRLWGRCIFFFCFLLEAIDS). N-linked (GlcNAc...) asparagine glycosylation is found at N55 and N114. The Ig-like C2-type domain occupies 73-154 (GYKLLIICKA…MAKNFKAEYT (82 aa)). A disulfide bridge links C80 with C136.

Interacts with the non-alpha subunit of nicotinic acetylcholine receptor unc-29 and lev-10 to stabilize the complex formed between unc-29 and lev-10. In terms of tissue distribution, expressed in body wall muscle cells, the pharyngeal muscle cell pm6 and in four head neurons.

The protein resides in the synapse. It is found in the secreted. Required for the localization of acetylcholine receptors at neuromuscular junctions and for subsequently controlling the response evoked by receptor stimulation. This is Immunoglobulin domain-containing protein oig-4 from Caenorhabditis elegans.